The chain runs to 462 residues: Golgi-associated PDZ and coiled-coil motif-containing protein (462 aa).

Residues 83-194 (KAQSVSQINH…EDEALRGHIA (112 aa)) adopt a coiled-coil conformation. A PDZ domain is found at 288–371 (KVLLLKEDHE…EIEFEVVYVA (84 aa)). A disordered region spans residues 427–449 (TDTHENGDLGTASETPLDDGASK).

Homooligomer. Interacts with FZD5. Interacts with FZD8. Interacts with GRID2 and BECN1. Interacts with CSPG5. Interacts with CLCN3. Interacts with STX6. Interacts with CFTR. Interacts with ASIC3. Interacts with GOLGA3. Interacts with NLGN1. Interacts with RHOQ. Interacts with MARCHF2; the interaction leads to CFTR ubiquitination and degradation. May interact with CACNG2. Interacts with CCDC62.

It localises to the cytoplasm. The protein resides in the golgi apparatus membrane. The protein localises to the golgi apparatus. It is found in the trans-Golgi network membrane. Its subcellular location is the synapse. It localises to the postsynaptic density. The protein resides in the cell projection. The protein localises to the dendrite. Its function is as follows. Plays a role in intracellular protein trafficking and degradation. May regulate CFTR chloride currents and acid-induced ASIC3 currents by modulating cell surface expression of both channels. May also regulate the intracellular trafficking of the ADR1B receptor. May play a role in autophagy. Together with MARCHF2 mediates the ubiquitination and lysosomal degradation of CFTR. Overexpression results in CFTR intracellular retention and degradation in the lysosomes. In Pongo abelii (Sumatran orangutan), this protein is Golgi-associated PDZ and coiled-coil motif-containing protein (GOPC).